Consider the following 118-residue polypeptide: Small ribosomal subunit protein uS13 (118 aa).

Residues 91 to 118 form a disordered region; the sequence is HRHSLPVRGQRTKTNARTRKGPRKPIRK.

The protein belongs to the universal ribosomal protein uS13 family. As to quaternary structure, part of the 30S ribosomal subunit. Forms a loose heterodimer with protein S19. Forms two bridges to the 50S subunit in the 70S ribosome.

In terms of biological role, located at the top of the head of the 30S subunit, it contacts several helices of the 16S rRNA. In the 70S ribosome it contacts the 23S rRNA (bridge B1a) and protein L5 of the 50S subunit (bridge B1b), connecting the 2 subunits; these bridges are implicated in subunit movement. Contacts the tRNAs in the A and P-sites. The chain is Small ribosomal subunit protein uS13 from Hahella chejuensis (strain KCTC 2396).